Reading from the N-terminus, the 1415-residue chain is MNQELSTNPFNPVAPVKTFDEIKISLASPERILSWSYGEIKKPETINYRTFKPERDGLFCARIFGPIKDYECLCGKYKRMKYRGVVCEKCGVEVTLQKVRRERMGHIELAAPVAHIWFLKSLPSRIGLMLDMTLRDLERILYFENYVVIEPGLTDLTYGQLMTEEEFLDAQDQYGADAFTANIGAEAIREMLSAIDLEQTAETLREELKEATGELKPKKIIKRLKIVESFLESGNRPEWMILTVLPVIPPELRPLVPLDGGRFATSDLNDLYRRVINRNNRLKRLIELRAPDIIVRNEKRMLQEAVDALFDNGRRGRVITGTNKRPLKSLSDMLKGKQGRFRQNLLGKRVDFSGRSVIVTGPELKLHQCGLPKKMALELFKPFIYSRLEAKGLSSTVKQAKKLVEKERPEVWDILDEVIREHPVLLNRAPTLHRLGIQAFEPILIEGKAIQLHPLVCSAFNADFDGDQMAVHVPLSLEAQLEARVLMMSTNNVLSPANGAPIIVPSQDMVLGLYYTTMERRGMKGEGMAFSSVEEVEHALAAGEVHLHATITARIKQIDDEGNEVVKRYQTTPGRLRLGNLLPLNAKAPFELVNRLLRKKDVQNVIDTVYRYCGQKESVIFCDQIMGMGFREAFKAGISFGKDDMLIPDTKWPIVNEVRDQVKEFEQQYMDGLITQGEKYNKVVDAWSKCSDKVAGEMMAEISAVRYDDAGAEKEPNSVYMMSHSGARGSPAQMKQLGGMRGLMAKPNGEIIETPIISNFKEGLTVLEYFNSTHGARKGLADTALKTANSGYLTRRLVDVAQDCIVRSHDCGTENAITASAAVNDGEVVSPLSERVLGRVAAEDILVPGTDEVVVARGELIDERRADLIDQANVALVRIRSPLTCEAEEGVCAMCYGRDLARGTLVNIGEAVGIIAAQSIGEPGTQLTMRTFHIGGIAQGGQQSFLEASQEGRIEFRNPNLLENANGEQIVMGRNMQLAIIDEAGQERATHKLTYGAKVHVKDGQSVKRGTRLFEWDPYTLPIIAEKGGVARFVDLVSGISVREDTDEATGMTQKIVSDWRSTPKGGDLKPEIIIMDPDTGNPMRNEAGNPISYPMSVEAILSVEDGQTVRAGDVVARIPREGARTKDITGGLPRVAELFEARRPKDHAIIAENDGYVRFGKDYKNKRRITIEPVDETLNSVEYMVPKGKHIPVQEGDFVQKGDYIMDGNPAPHDILRIMGVEALANYMIDEVQEVYRLQGVKINDKHIEVIVRQMLQKYEILDSGETTLLKGEHVDKAELDETNEKAIQHGMRPAHAEPILLGITKASLQTRSFISAASFQETTRVLTEASVQGKRDKLVGLKENVIVGRLIPAGTGGATSRVKKIAHDRDQTVIDARRAEAESAAALAAPTDEVIDLGPEDSGLVETVESRKE.

Zn(2+) is bound by residues C72, C74, C87, and C90. Residues D463, D465, and D467 each coordinate Mg(2+). Residues C811, C885, C892, and C895 each coordinate Zn(2+).

It belongs to the RNA polymerase beta' chain family. In terms of assembly, the RNAP catalytic core consists of 2 alpha, 1 beta, 1 beta' and 1 omega subunit. When a sigma factor is associated with the core the holoenzyme is formed, which can initiate transcription. Mg(2+) serves as cofactor. Zn(2+) is required as a cofactor.

The enzyme catalyses RNA(n) + a ribonucleoside 5'-triphosphate = RNA(n+1) + diphosphate. Its function is as follows. DNA-dependent RNA polymerase catalyzes the transcription of DNA into RNA using the four ribonucleoside triphosphates as substrates. The polypeptide is DNA-directed RNA polymerase subunit beta' (Cereibacter sphaeroides (strain ATCC 17025 / ATH 2.4.3) (Rhodobacter sphaeroides)).